Consider the following 540-residue polypeptide: Protein SOSEKI 3 (540 aa).

The tract at residues 32 to 123 is DIX-like oligomerization domain; it reads KKVQIVYYLS…YVLKGSELFD (92 aa). 2 disordered regions span residues 147-201 and 219-294; these read EPPS…DAKN and ADAS…SSLG. Low complexity-rich tracts occupy residues 150 to 163 and 185 to 194; these read SSRS…SSSM and RSVSSSGVSP. Polar residues predominate over residues 221 to 244; it reads ASTQTDETVSGRSKTPIETFSRGV. Residues 246-256 are compositionally biased toward acidic residues; that stretch reads TDEDVSSEPET. Residues 280–292 show a composition bias toward low complexity; the sequence is NSVSPPFSNSASS. Positions 342-343 match the Association to cell membranes motif; it reads CG. The tract at residues 412-492 is disordered; that stretch reads KKDAADSNAS…KNIPCTTKTH (81 aa). Polar residues predominate over residues 418–437; that stretch reads SNASLKRSSSYNGDRASNQM. A compositionally biased stretch (basic and acidic residues) spans 471–482; that stretch reads SEKRRDSSEDTT.

It belongs to the SOSEKI family. In terms of assembly, homodimer. Forms long polymer filaments with other SOKs proteins polymers (e.g. SOK1, SOK2, SOK3 and SOK4) crucial for polar localization and biological activity. Binds to ANGUSTIFOLIA (AN). In terms of tissue distribution, expressed during embryogenesis and in roots.

It localises to the cell membrane. SOSEKI proteins (SOK1-5) locally interpret global polarity cues and can influence cell division orientation to coordinate cell polarization relative to body axes, probably by guiding ANGUSTIFOLIA (AN) polarized localization. The chain is Protein SOSEKI 3 from Arabidopsis thaliana (Mouse-ear cress).